The primary structure comprises 79 residues: MTVTPKQIYNYTVLLEKELDGGYHAFCPMLKGCHSQGDTFEEAIQNITEAIELYIESLIAEHQPVPKEDLIVKPLSILV.

It belongs to the UPF0150 family.

This chain is UPF0150 protein ssr1765, found in Synechocystis sp. (strain ATCC 27184 / PCC 6803 / Kazusa).